The primary structure comprises 714 residues: MEMASAFTLNVRLDNIAIITIDVPGEKMNTLKAEFASQVRAIIKQIRENKELRGVVFVSAKPDNFIAGADINMIGNCKTAQEAEVLARQGQQLMAEIHALPIPVIAAIHGACLGGGLELALACHGRVCTDDPKTVLGLPEVQLGLLPGSGGTQRLPRLIGVSTALEMILTGKQLRAKQAVKLGLVDDVVPHSILLEAAVELAKQDRPSSRPLPVRERILAGPLGRALLFKMVGKKTEHKTQGNYPATERILEVVETGLAQGTSSGYDAEARAFGELAMTPQSQALRNIFFASSEVKKDPGSDAPPAPLNSVGILGGGLMGGGIAYVTACKAGLPVRIKDINPRGINHALKYSWDQLEGKVRRRHLKASERDKQLALISGTTDYCGFAHRDLIIEAVFENLELKQQMVAEVEQNCATHTIFASNTSSLPIGDIAAHAARPEQVIGLHFFSPVEKMPLVEIIPHASTSAQTIATTVKLAKKQGKTPIVVRDKAGFYVNRILAPYINEAIRMLTEGERIEHIDAALVKFGFPVGPIQLLDEVGIDTGTKIMPVLEAAYGERFSAPANVVSSILNDDRKGRKNGRGFYLYGQKGRKSKKQVDPAIYPLIGAQGQGRLSAPQVAERCVMLMLNEAVRCLDEQVIRSVRDGDIGAVFGIGFPPFLGGPFRYIDSLGAGEVVAIMQRLATQYGSRFTPCDRLVEMSERGESFWKTTATDLQ.

The enoyl-CoA hydratase stretch occupies residues 1 to 190 (MEMASAFTLN…KLGLVDDVVP (190 aa)). The interval 306–714 (APLNSVGILG…FWKTTATDLQ (409 aa)) is 3-hydroxyacyl-CoA dehydrogenase.

The protein in the N-terminal section; belongs to the enoyl-CoA hydratase/isomerase family. This sequence in the central section; belongs to the 3-hydroxyacyl-CoA dehydrogenase family. Heterotetramer of two alpha chains (FadJ) and two beta chains (FadI).

The protein resides in the cytoplasm. The enzyme catalyses a (3S)-3-hydroxyacyl-CoA = a (2E)-enoyl-CoA + H2O. It carries out the reaction a 4-saturated-(3S)-3-hydroxyacyl-CoA = a (3E)-enoyl-CoA + H2O. It catalyses the reaction a (3S)-3-hydroxyacyl-CoA + NAD(+) = a 3-oxoacyl-CoA + NADH + H(+). The catalysed reaction is (3S)-3-hydroxybutanoyl-CoA = (3R)-3-hydroxybutanoyl-CoA. It participates in lipid metabolism; fatty acid beta-oxidation. In terms of biological role, catalyzes the formation of a hydroxyacyl-CoA by addition of water on enoyl-CoA. Also exhibits 3-hydroxyacyl-CoA epimerase and 3-hydroxyacyl-CoA dehydrogenase activities. The protein is Fatty acid oxidation complex subunit alpha of Escherichia coli O127:H6 (strain E2348/69 / EPEC).